Reading from the N-terminus, the 291-residue chain is 4-hydroxy-tetrahydrodipicolinate synthase (291 aa).

T44 contacts pyruvate. Y132 functions as the Proton donor/acceptor in the catalytic mechanism. K160 serves as the catalytic Schiff-base intermediate with substrate. Residue V202 coordinates pyruvate.

This sequence belongs to the DapA family. As to quaternary structure, homotetramer; dimer of dimers.

Its subcellular location is the cytoplasm. It catalyses the reaction L-aspartate 4-semialdehyde + pyruvate = (2S,4S)-4-hydroxy-2,3,4,5-tetrahydrodipicolinate + H2O + H(+). It participates in amino-acid biosynthesis; L-lysine biosynthesis via DAP pathway; (S)-tetrahydrodipicolinate from L-aspartate: step 3/4. Its function is as follows. Catalyzes the condensation of (S)-aspartate-beta-semialdehyde [(S)-ASA] and pyruvate to 4-hydroxy-tetrahydrodipicolinate (HTPA). This chain is 4-hydroxy-tetrahydrodipicolinate synthase, found in Clostridium perfringens (strain SM101 / Type A).